A 165-amino-acid chain; its full sequence is Protein SprT (165 aa).

In terms of domain architecture, SprT-like spans 20–163 (EKLAQANLKL…RCVHCGEQLV (144 aa)). Residue His78 participates in Zn(2+) binding. Residue Glu79 is part of the active site. His82 provides a ligand contact to Zn(2+).

Belongs to the SprT family. It depends on Zn(2+) as a cofactor.

Its subcellular location is the cytoplasm. This chain is Protein SprT, found in Shigella sonnei (strain Ss046).